A 343-amino-acid chain; its full sequence is Thiamine thiazole synthase 4, chloroplastic (343 aa).

Substrate contacts are provided by residues alanine 89, 109-110, glycine 117, and alanine 182; that span reads EQ. Residue cysteine 211 is modified to 2,3-didehydroalanine (Cys). Substrate-binding positions include aspartate 213, histidine 228, methionine 280, and 290–292; that span reads RMG.

It belongs to the THI4 family. In terms of assembly, homooctamer. It depends on Fe cation as a cofactor. In terms of processing, during the catalytic reaction, a sulfide is transferred from Cys-211 to a reaction intermediate, generating a dehydroalanine residue.

It localises to the plastid. It is found in the chloroplast. The enzyme catalyses [ADP-thiazole synthase]-L-cysteine + glycine + NAD(+) = [ADP-thiazole synthase]-dehydroalanine + ADP-5-ethyl-4-methylthiazole-2-carboxylate + nicotinamide + 3 H2O + 2 H(+). Its function is as follows. Involved in biosynthesis of the thiamine precursor thiazole. Catalyzes the conversion of NAD and glycine to adenosine diphosphate 5-(2-hydroxyethyl)-4-methylthiazole-2-carboxylic acid (ADT), an adenylated thiazole intermediate. The reaction includes an iron-dependent sulfide transfer from a conserved cysteine residue of the protein to a thiazole intermediate. The enzyme can only undergo a single turnover, which suggests it is a suicide enzyme. May have additional roles in adaptation to various stress conditions and in DNA damage tolerance. This chain is Thiamine thiazole synthase 4, chloroplastic, found in Physcomitrium patens (Spreading-leaved earth moss).